The primary structure comprises 533 residues: Purine-cytosine permease FCY2 (533 aa).

Residues M1–N98 lie on the Cytoplasmic side of the membrane. A Glycyl lysine isopeptide (Lys-Gly) (interchain with G-Cter in ubiquitin) cross-link involves residue K16. S18 bears the Phosphoserine mark. Residues M99–G119 traverse the membrane as a helical segment. The Extracellular portion of the chain corresponds to Q120–S121. Residues V122 to V141 traverse the membrane as a helical segment. The Cytoplasmic portion of the chain corresponds to F142–H198. The interval I165–V184 is surface seeking. Residues V199–F218 form a helical membrane-spanning segment. Residues F219–E256 lie on the Extracellular side of the membrane. Residues W257–G276 form a helical membrane-spanning segment. Residues F277–K300 lie on the Cytoplasmic side of the membrane. A helical transmembrane segment spans residues I301 to G320. Over A321–Y347 the chain is Extracellular. Residues A348 to A367 traverse the membrane as a helical segment. The Cytoplasmic portion of the chain corresponds to L368–V398. Residues V399 to Y418 form a helical membrane-spanning segment. The Extracellular segment spans residues F419 to H465. The helical transmembrane segment at L466–L485 threads the bilayer. Residues G486–R533 are Cytoplasmic-facing.

It belongs to the purine-cytosine permease (2.A.39) family. Post-translationally, not N-glycosylated.

It is found in the membrane. In terms of biological role, this permease has a broad specificity towards purines, and also transport cytosine and 5-methylcytosine but neither uracil nor thymine. This is Purine-cytosine permease FCY2 (FCY2) from Saccharomyces cerevisiae (strain ATCC 204508 / S288c) (Baker's yeast).